The chain runs to 458 residues: Phosphoglucosamine mutase (458 aa).

Residue Ser-100 is the Phosphoserine intermediate of the active site. Mg(2+) is bound by residues Ser-100, Asp-239, Asp-241, and Asp-243. Ser-100 bears the Phosphoserine mark.

It belongs to the phosphohexose mutase family. Mg(2+) is required as a cofactor. Post-translationally, activated by phosphorylation.

It catalyses the reaction alpha-D-glucosamine 1-phosphate = D-glucosamine 6-phosphate. Functionally, catalyzes the conversion of glucosamine-6-phosphate to glucosamine-1-phosphate. This Dictyoglomus thermophilum (strain ATCC 35947 / DSM 3960 / H-6-12) protein is Phosphoglucosamine mutase.